The sequence spans 334 residues: Pantothenate synthetase (334 aa).

ATP is bound at residue 34 to 41 (MGALHEGH). His-41 acts as the Proton donor in catalysis. Position 71 (Gln-71) interacts with (R)-pantoate. Gln-71 lines the beta-alanine pocket. ATP is bound at residue 158–161 (GQKD). Gln-164 is a (R)-pantoate binding site. Residues Val-187 and 195-198 (LSSR) each bind ATP. The segment at 288–334 (PLMLGTRGPAGEASPPNRERSEPGSAEQNKSPGEARTTPSGTSEASE) is disordered. Residues 313–334 (AEQNKSPGEARTTPSGTSEASE) show a composition bias toward polar residues.

Belongs to the pantothenate synthetase family. Homodimer.

It localises to the cytoplasm. It carries out the reaction (R)-pantoate + beta-alanine + ATP = (R)-pantothenate + AMP + diphosphate + H(+). Its pathway is cofactor biosynthesis; (R)-pantothenate biosynthesis; (R)-pantothenate from (R)-pantoate and beta-alanine: step 1/1. In terms of biological role, catalyzes the condensation of pantoate with beta-alanine in an ATP-dependent reaction via a pantoyl-adenylate intermediate. The chain is Pantothenate synthetase from Nocardioides sp. (strain ATCC BAA-499 / JS614).